The primary structure comprises 906 residues: Protein translocase subunit SecA (906 aa).

Residues Gln87, 105-109 (GEGKT), and Asp507 contribute to the ATP site. The Zn(2+) site is built by Cys890, Cys892, Cys901, and His902.

The protein belongs to the SecA family. In terms of assembly, monomer and homodimer. Part of the essential Sec protein translocation apparatus which comprises SecA, SecYEG and auxiliary proteins SecDF-YajC and YidC. Requires Zn(2+) as cofactor.

The protein resides in the cell inner membrane. It localises to the cytoplasm. It catalyses the reaction ATP + H2O + cellular proteinSide 1 = ADP + phosphate + cellular proteinSide 2.. In terms of biological role, part of the Sec protein translocase complex. Interacts with the SecYEG preprotein conducting channel. Has a central role in coupling the hydrolysis of ATP to the transfer of proteins into and across the cell membrane, serving both as a receptor for the preprotein-SecB complex and as an ATP-driven molecular motor driving the stepwise translocation of polypeptide chains across the membrane. This is Protein translocase subunit SecA from Laribacter hongkongensis (strain HLHK9).